Here is a 122-residue protein sequence, read N- to C-terminus: Large ribosomal subunit protein uL14c (122 aa).

It belongs to the universal ribosomal protein uL14 family. In terms of assembly, part of the 50S ribosomal subunit.

The protein localises to the plastid. It localises to the chloroplast. In terms of biological role, binds to 23S rRNA. The chain is Large ribosomal subunit protein uL14c from Cycas taitungensis (Prince sago).